Here is a 207-residue protein sequence, read N- to C-terminus: Oligoribonuclease (207 aa).

Residues 20 to 183 form the Exonuclease domain; sequence LVWLDMEMTG…ADIHESIDEL (164 aa). Tyrosine 141 is an active-site residue.

Belongs to the oligoribonuclease family.

It is found in the cytoplasm. In terms of biological role, 3'-to-5' exoribonuclease specific for small oligoribonucleotides. In Paraburkholderia xenovorans (strain LB400), this protein is Oligoribonuclease.